The following is a 338-amino-acid chain: Nicotinate-nucleotide--dimethylbenzimidazole phosphoribosyltransferase (338 aa).

Catalysis depends on E305, which acts as the Proton acceptor.

The protein belongs to the CobT family.

The enzyme catalyses 5,6-dimethylbenzimidazole + nicotinate beta-D-ribonucleotide = alpha-ribazole 5'-phosphate + nicotinate + H(+). It functions in the pathway nucleoside biosynthesis; alpha-ribazole biosynthesis; alpha-ribazole from 5,6-dimethylbenzimidazole: step 1/2. Its function is as follows. Catalyzes the synthesis of alpha-ribazole-5'-phosphate from nicotinate mononucleotide (NAMN) and 5,6-dimethylbenzimidazole (DMB). The protein is Nicotinate-nucleotide--dimethylbenzimidazole phosphoribosyltransferase of Rhizobium johnstonii (strain DSM 114642 / LMG 32736 / 3841) (Rhizobium leguminosarum bv. viciae).